The sequence spans 373 residues: Spermidine/putrescine import ATP-binding protein PotA (373 aa).

In terms of domain architecture, ABC transporter spans 11–241 (IELRSLKKSY…PSNLFVAKFI (231 aa)). 43–50 (GPSGCGKT) is an ATP binding site.

This sequence belongs to the ABC transporter superfamily. Spermidine/putrescine importer (TC 3.A.1.11.1) family. In terms of assembly, the complex is composed of two ATP-binding proteins (PotA), two transmembrane proteins (PotB and PotC) and a solute-binding protein (PotD).

It localises to the cell inner membrane. It catalyses the reaction ATP + H2O + polyamine-[polyamine-binding protein]Side 1 = ADP + phosphate + polyamineSide 2 + [polyamine-binding protein]Side 1.. In terms of biological role, part of the ABC transporter complex PotABCD involved in spermidine/putrescine import. Responsible for energy coupling to the transport system. In Mannheimia succiniciproducens (strain KCTC 0769BP / MBEL55E), this protein is Spermidine/putrescine import ATP-binding protein PotA.